A 512-amino-acid polypeptide reads, in one-letter code: Maturase K (512 aa).

It belongs to the intron maturase 2 family. MatK subfamily.

It localises to the plastid. The protein resides in the chloroplast. Usually encoded in the trnK tRNA gene intron. Probably assists in splicing its own and other chloroplast group II introns. In Lilium longiflorum (Trumpet lily), this protein is Maturase K.